The primary structure comprises 462 residues: ATP synthase subunit beta (462 aa).

ATP is bound at residue 151–158 (GGAGVGKT).

This sequence belongs to the ATPase alpha/beta chains family. In terms of assembly, F-type ATPases have 2 components, CF(1) - the catalytic core - and CF(0) - the membrane proton channel. CF(1) has five subunits: alpha(3), beta(3), gamma(1), delta(1), epsilon(1). CF(0) has four main subunits: a(1), b(1), b'(1) and c(9-12).

It is found in the cell inner membrane. The enzyme catalyses ATP + H2O + 4 H(+)(in) = ADP + phosphate + 5 H(+)(out). In terms of biological role, produces ATP from ADP in the presence of a proton gradient across the membrane. The catalytic sites are hosted primarily by the beta subunits. The chain is ATP synthase subunit beta from Pelodictyon phaeoclathratiforme (strain DSM 5477 / BU-1).